Consider the following 628-residue polypeptide: Carbon monoxide dehydrogenase 1 (628 aa).

The [4Fe-4S] cluster site is built by C44, C52, C53, C56, C61, and C75. Positions 266, 302, 340, 448, 478, and 519 each coordinate [Ni-4Fe-5S] cluster.

Belongs to the Ni-containing carbon monoxide dehydrogenase family. Homodimer. The cofactor is [4Fe-4S] cluster. Requires [Ni-4Fe-5S] cluster as cofactor.

The enzyme catalyses CO + 2 oxidized [2Fe-2S]-[ferredoxin] + H2O = 2 reduced [2Fe-2S]-[ferredoxin] + CO2 + 2 H(+). In terms of biological role, CODH oxidizes carbon monoxide coupled, via CooF, to the reduction of a hydrogen cation by a hydrogenase (possibly CooH). This chain is Carbon monoxide dehydrogenase 1 (cooS1), found in Methanosarcina acetivorans (strain ATCC 35395 / DSM 2834 / JCM 12185 / C2A).